The primary structure comprises 110 residues: Nucleoid-associated protein CbuK_1603 (110 aa).

It belongs to the YbaB/EbfC family. As to quaternary structure, homodimer.

It localises to the cytoplasm. Its subcellular location is the nucleoid. Functionally, binds to DNA and alters its conformation. May be involved in regulation of gene expression, nucleoid organization and DNA protection. The sequence is that of Nucleoid-associated protein CbuK_1603 from Coxiella burnetii (strain CbuK_Q154) (Coxiella burnetii (strain Q154)).